Consider the following 197-residue polypeptide: UPF0228 protein MA_3125 (197 aa).

This sequence belongs to the UPF0228 family.

This chain is UPF0228 protein MA_3125, found in Methanosarcina acetivorans (strain ATCC 35395 / DSM 2834 / JCM 12185 / C2A).